Here is a 974-residue protein sequence, read N- to C-terminus: MNSMADTDRVNLTPIQRASEKSVQYHLKQVIGRGSYGVVYKAINKHTDQVVAIKEVVYENDEELNDIMAEISLLKNLNHNNIVKYHGFIRKSYELYILLEYCANGSLRRLISRSSTGLSENESKTYVTQTLLGLKYLHGEGVIHRDIKAANILLSADNTVKLADFGVSTIVNSSALTLAGTLNWMAPEILGNRGASTLSDIWSLGATVVEMLTKNPPYHNLTDANIYYAVENDTYYPPSSFSEPLKDFLSKCFVKNMYKRPTADQLLKHVWINSTENVKVDKLNKFKEDFTDADYHWDADFQEEKLNISPSKFSLAAAPAAWAENNQELDLMPPTESQLLSQLKSSSKPLTDLHVLFSVCSLENIADTIIECLSRTTVDKRLITAFGSIFVYDTQHNHSRLRLKFIAMGGIPLIIKFEHLAKEFVIDYPQTLIECGIMYPPNFASLKTPKYILELVYRFYDLTSTAFWCRWCFKHLDISLLLNNIHERRAQSILLKLSSYAPWSFEKILPSLIDSKLKKKILISPQITYVVFKSINYMITTNDDKIHKSAIPSSSSLPLSSSPTRNSPVNSVQSPSRSPVHSLMATRPSSPMRHKSISNFPHLTISSKSRLLIELPEGFFTWLTSFFVDMAQIKDLSVLKYFTKLCYLTVHINSTFLNDLLDNDAFFAFIRNIDTIIPFIDDAKTAAFIWKQITAICVEMSLDMDQMSASLFSTAMNFIRKKNNTSISGLEIILNCLHFTLRNVNDDVAPTVGSSESHSVFLIKVNNDAAIELPIDQLVDLFYALNDDDVNLSKLISIFTKICSLPGFENLTINIIFHPNFYEKIVSFFDTYFNSLLIQIDLLKFIKLIFSKSLLKLYDYTGQPDPIKQTEPNRRNKATVFKLRAILVQITEFLNNNWNKDVPKRNSNQVGGDSVLICQLCEDIRSLSKKGSLQKVSSVTAAIGSSPTKDERSNLRSSKDKSDGFSVPITTFQT.

The region spanning 25–272 (YHLKQVIGRG…ADQLLKHVWI (248 aa)) is the Protein kinase domain. Residues 31-39 (IGRGSYGVV) and Lys54 each bind ATP. The active-site Proton acceptor is Asp146. The self association domain stretch occupies residues 360–702 (CSLENIADTI…ITAICVEMSL (343 aa)). Residues 554–563 (SSSLPLSSSP) show a composition bias toward low complexity. The disordered stretch occupies residues 554–592 (SSSLPLSSSPTRNSPVNSVQSPSRSPVHSLMATRPSSPM). Phosphoserine occurs at positions 561 and 567. The segment covering 564–579 (TRNSPVNSVQSPSRSP) has biased composition (polar residues). The auto-inhibitory domain stretch occupies residues 751 to 974 (TVGSSESHSV…FSVPITTFQT (224 aa)). Residue Thr870 is modified to Phosphothreonine. The tract at residues 941–974 (AAIGSSPTKDERSNLRSSKDKSDGFSVPITTFQT) is disordered. Basic and acidic residues predominate over residues 948 to 963 (TKDERSNLRSSKDKSD).

It belongs to the protein kinase superfamily. Ser/Thr protein kinase family. Homodimer. Interacts with TEM1. In terms of processing, phosphorylation by CDK1 reduces the binding to the mother spindle pole body. The extent of phosphorylation gradually increases during cell-cycle progression until some point during late anaphase/telophase when it is rapidly dephosphorylated by CDC14. Phosphorylation inhibits kinase activity and dephosphorylation by CDC14 activates CDC15.

Its subcellular location is the cytoplasm. The protein resides in the cytoskeleton. The protein localises to the spindle pole. It is found in the bud neck. It carries out the reaction L-seryl-[protein] + ATP = O-phospho-L-seryl-[protein] + ADP + H(+). It catalyses the reaction L-threonyl-[protein] + ATP = O-phospho-L-threonyl-[protein] + ADP + H(+). With respect to regulation, kinase activity is inhibited by phosphorylation and activated by dephosphorylation by CDC14. Its function is as follows. Protein kinase of the mitotic exit network (MEN) essential for late nuclear division in the mitotic cycle. Promotes mitotic exit by phosphorylating DBF2 and directly switching on DBF2 kinase activity. Involved in the localization of DBF2 and DBF20 to the neck which is necessary to undergo cytokinesis. Plays a role in segregation of chromosomes during recovery from spindle checkpoint activation. Required for spindle pole localization of CDK1 and inactivation of CDC2 kinase activity at the end of mitosis. Required for spindle disassembly after meiosis II and plays a role in spore morphogenesis. This is Cell division control protein 15 (CDC15) from Saccharomyces cerevisiae (strain ATCC 204508 / S288c) (Baker's yeast).